Reading from the N-terminus, the 432-residue chain is uncharacterized protein (432 aa).

Disordered regions lie at residues 37-61, 127-151, and 298-378; these read DGIG…SADC, RDHD…DTRY, and SVSS…NHQC. Polar residues predominate over residues 312-335; it reads DSSTLANTQGFREDQSQQQHTPSP. The segment covering 341 to 366 has biased composition (low complexity); the sequence is SSLSHQFHQSIHQSHQHHQSIYQSQH.

This is an uncharacterized protein from Arabidopsis thaliana (Mouse-ear cress).